The chain runs to 135 residues: Small ribosomal subunit protein bS18 (135 aa).

Residues 1–65 are disordered; it reads MARPDMGGPK…GDEGGGRRGF (65 aa). Residues 9–41 show a composition bias toward gly residues; it reads PKTGGFGGPRSGGFGGGGGGGGGFGGGGFGGGR. A compositionally biased stretch (basic and acidic residues) spans 42–61; that stretch reads GGDRGDRGDRDDRGGDEGGG.

Belongs to the bacterial ribosomal protein bS18 family. As to quaternary structure, part of the 30S ribosomal subunit. Forms a tight heterodimer with protein bS6.

In terms of biological role, binds as a heterodimer with protein bS6 to the central domain of the 16S rRNA, where it helps stabilize the platform of the 30S subunit. The sequence is that of Small ribosomal subunit protein bS18 from Anaeromyxobacter sp. (strain K).